Consider the following 826-residue polypeptide: MLWKTALIFLCWGLTSGELQNGLSATPAAPARRTLDFGFVPSGVYDTVAYYEPGAIGILFNMMHAFLFVVQPNPFPEDLVISAAKDKFGAIQSEYQKVIYYELGFVVCAALGLLFTVLLPLVGLLFCLCRCCDNCGGEMHQRQRKNADCLRGLLTTLLLTTTFIITAGVLCAYAANQNLSSQLKGMRRLVKSNLKDLHTFANQTPAQIDYLISRYGTVKEQVLHDLENVGVILGGRIHEELGKEVKPALDATLSMTGTMRDTKDALENVSLTLETLQEGTVKLQANLSVVRNSLRNALNDPVCVDAPAPEICRNIRNSIPKLEIAANYSSLPDVTDQLNKVNDVLKTDLSQIVAKGIASFNDTPAMVTAQTRNIVEGVKVLLDDIGNNITSFSKMLPVHSSLANFTRMISHTHSQIEDIYPQIDQMDFYRWIGCITLCCMIVLILTFNFLGLLCGILGFDRHASPTTRGCVSNTGGNFLMAGVGFSFLFSWVLMGVITALFLAGGNLEKLVCEPFQTRQLFKVLDTPYLVNSAWRNFIPGYLYNDPEMDLTAYSLYSNCKDNRGIYSALHLDRIFNISSFFNTSVYSKDVSRKFEGLKVDLRGIILLESEGKVNLNNFSETGINEIDFAAYLEEVNKGVTRIDLIDFANQLDAQADQLSKGTLQTSLKGHANTIRQIHIQQVVPLEQSMSTLNQSIRLLERTSSDLPLRVEDVLKAVDDAQNLISYNATFVINQETEKYKQNIIGYFKQYIDWIRTSLALEVATCKPLSNIVDTVEILGCGFLLDSMNTFWFGLGCCTLFLLPSIILSVKLAKFYRRMDTEDVYDE.

3 helical membrane passes run 50–70 (YYEP…LFVV), 106–126 (VVCA…GLLF), and 153–173 (LLTT…LCAY). N-linked (GlcNAc...) asparagine glycans are attached at residues Asn178, Asn268, Asn286, Asn327, Asn388, and Asn404. 2 helical membrane passes run 439–459 (CMIV…ILGF) and 483–503 (VGFS…LFLA). N-linked (GlcNAc...) asparagine glycans are attached at residues Asn576, Asn582, Asn617, and Asn693.

The protein belongs to the prominin family.

The protein localises to the apical cell membrane. Its subcellular location is the cell projection. It is found in the microvillus membrane. The protein resides in the endoplasmic reticulum. It localises to the endoplasmic reticulum-Golgi intermediate compartment. Its function is as follows. May play a role in cell differentiation, proliferation and apoptosis. Binds cholesterol in cholesterol-containing plasma membrane microdomains and may play a role in the organization of the apical plasma membrane in epithelial cells. Involved in regulation of MAPK and Akt signaling pathways. In Danio rerio (Zebrafish), this protein is Prominin-1-A (prom1a).